Reading from the N-terminus, the 65-residue chain is Neuropeptide-like protein 28 (65 aa).

Residues 1 to 22 (MISTSSILILVFLLACFMATSA) form the signal peptide. 4 positions are modified to tyrosine amide: Y29, Y39, Y47, and Y55. Tryptophan amide is present on W63.

It belongs to the YARP (YGGW-amide related peptide) family.

The protein localises to the secreted. Its function is as follows. May have antimicrobial activity. This is Neuropeptide-like protein 28 (nlp-28) from Caenorhabditis elegans.